An 842-amino-acid chain; its full sequence is Gamma-aminobutyric acid type B receptor subunit 2 (842 aa).

Residues 1-17 form the signal peptide; the sequence is MSRWLSLLLFAVQAVGG. At 18–438 the chain is on the extracellular side; that stretch reads YEAGEELSCK…TERRREHISS (421 aa). Asn-274, Asn-279, Asn-327, and Asn-366 each carry an N-linked (GlcNAc...) asparagine glycan. The chain crosses the membrane as a helical span at residues 439-459; the sequence is ILFLAMSLLALIGIFLALIFL. The Cytoplasmic segment spans residues 460–477; the sequence is LINFRYRNHRFIKMSSPN. The chain crosses the membrane as a helical span at residues 478–498; the sequence is LNNIIIAGSICTFASVIMLGL. The Extracellular portion of the chain corresponds to 499-506; that stretch reads DTRIVSPD. The chain crosses the membrane as a helical span at residues 507–527; sequence VFVWLCYTKTWTLCIGFTLSF. At 528 to 556 the chain is on the cytoplasmic side; that stretch reads GAMFSKTWRVHSIFTNIRMDRKAIKDSKL. A helical membrane pass occupies residues 557–577; that stretch reads FIILGILLFIDICVLVTWAFV. Residues 578–610 lie on the Extracellular side of the membrane; sequence SPFSYTVTELPHIPEDNIVIIPEVEKCNSSHSG. N-linked (GlcNAc...) asparagine glycosylation is present at Asn-605. The helical transmembrane segment at 611-631 threads the bilayer; sequence VFQAVLYAVKGVLMILGCFLA. The Cytoplasmic segment spans residues 632–647; that stretch reads WETRHVNVPALNDSKY. Residues 648–668 form a helical membrane-spanning segment; it reads IGTSVYCCVVMSVLGLSTSVI. The Extracellular segment spans residues 669 to 676; sequence LQERVNEM. A helical membrane pass occupies residues 677–697; the sequence is FSLASFFVIFSTTLTLCLVFV. Residues 698-842 are Cytoplasmic-facing; it reads PKVIELARNP…VDPDEPSTKL (145 aa). The segment covering 725–740 has biased composition (polar residues); the sequence is AKTSQPMSPQPRSDSS. Disordered stretches follow at residues 725–744 and 791–842; these read AKTS…GDLI and SPSS…STKL.

The protein belongs to the G-protein coupled receptor 3 family. As to quaternary structure, may form a heterodimer with gbb-1. Expressed in cholinergic motor neurons.

Its subcellular location is the cell membrane. Component of a heterodimeric G-protein coupled receptor for GABA, formed by gbb-1 and gbb-2. Within the heterodimeric GABA receptor, only gbb-1 seems to bind agonists, while gbb-2 mediates coupling to G proteins. Ligand binding causes a conformation change that triggers signaling via guanine nucleotide-binding proteins (G proteins) and modulates the activity of down-stream effectors, such as adenylate cyclase. Signaling inhibits adenylate cyclase, stimulates phospholipase A2, activates potassium channels, inactivates voltage-dependent calcium-channels and modulates inositol phospholipid hydrolysis. Plays a critical role in the fine-tuning of inhibitory synaptic transmission. Pre-synaptic GABA receptor inhibits neurotransmitter release by down-regulating high-voltage activated calcium channels, whereas postsynaptic GABA receptor decreases neuronal excitability by activating a prominent inwardly rectifying potassium (Kir) conductance that underlies the late inhibitory postsynaptic potentials. Along with gbb-1, may couple to the G(o)-alpha G-protein goa-1 to negatively regulate cholinergic receptor activity in the presence of high levels of acetylcholine in ventral cord motor neurons. As acetylcholine depolarizes body wall muscles, modulation of acetylcholine levels most likely results in the control of locomotory behavior. Regulates locomotory behavior in response to GABA release by GABAergic motor neurons. This chain is Gamma-aminobutyric acid type B receptor subunit 2, found in Caenorhabditis elegans.